We begin with the raw amino-acid sequence, 540 residues long: Phosphoenolpyruvate carboxykinase (ATP) (540 aa).

Arginine 65 provides a ligand contact to substrate. Lysine 87 is subject to N6-acetyllysine. Residues tyrosine 207 and lysine 213 each contribute to the substrate site. Residues lysine 213, histidine 232, and glycine 248–threonine 256 each bind ATP. Mn(2+) contacts are provided by lysine 213 and histidine 232. Aspartate 269 is a binding site for Mn(2+). ATP contacts are provided by residues glutamate 297, arginine 333, arginine 449–isoleucine 450, and threonine 455. Position 333 (arginine 333) interacts with substrate. An N6-acetyllysine modification is found at lysine 523.

The protein belongs to the phosphoenolpyruvate carboxykinase (ATP) family. In terms of assembly, monomer. It depends on Mn(2+) as a cofactor.

It is found in the cytoplasm. It catalyses the reaction oxaloacetate + ATP = phosphoenolpyruvate + ADP + CO2. The protein operates within carbohydrate biosynthesis; gluconeogenesis. Its function is as follows. Involved in the gluconeogenesis. Catalyzes the conversion of oxaloacetate (OAA) to phosphoenolpyruvate (PEP) through direct phosphoryl transfer between the nucleoside triphosphate and OAA. The sequence is that of Phosphoenolpyruvate carboxykinase (ATP) from Escherichia coli O157:H7.